We begin with the raw amino-acid sequence, 324 residues long: uncharacterized protein (324 aa).

The segment covering 1-11 (MNTNINVNGSN) has biased composition (polar residues). Disordered stretches follow at residues 1–77 (MNTN…YSYS), 132–194 (NNHY…NNNN), and 272–324 (DENI…DNDS). The span at 21–64 (NENNNNNNGRNNNTNNNNNGRYNNNNNNNNNNNNNNYNLNMNST) shows a compositional bias: low complexity. The segment covering 279 to 324 (SNNNNNNNNNNNNSYNVNICRNNSNFNVNENNGGDNNNDNNNDNDS) has biased composition (low complexity).

This is an uncharacterized protein from Dictyostelium discoideum (Social amoeba).